The primary structure comprises 138 residues: Large ribosomal subunit protein bL19 (138 aa).

It belongs to the bacterial ribosomal protein bL19 family.

This protein is located at the 30S-50S ribosomal subunit interface and may play a role in the structure and function of the aminoacyl-tRNA binding site. The protein is Large ribosomal subunit protein bL19 of Rickettsia conorii (strain ATCC VR-613 / Malish 7).